Reading from the N-terminus, the 340-residue chain is Methionine import ATP-binding protein MetN 2 (340 aa).

One can recognise an ABC transporter domain in the interval 2–241; the sequence is ITLQNVVKEY…PKEKVTQRFV (240 aa). 38-45 is a binding site for ATP; that stretch reads GYSGAGKS.

It belongs to the ABC transporter superfamily. Methionine importer (TC 3.A.1.24) family. The complex is composed of two ATP-binding proteins (MetN), two transmembrane proteins (MetI) and a solute-binding protein (MetQ).

It localises to the cell membrane. The catalysed reaction is L-methionine(out) + ATP + H2O = L-methionine(in) + ADP + phosphate + H(+). It carries out the reaction D-methionine(out) + ATP + H2O = D-methionine(in) + ADP + phosphate + H(+). In terms of biological role, part of the ABC transporter complex MetNIQ involved in methionine import. Responsible for energy coupling to the transport system. The sequence is that of Methionine import ATP-binding protein MetN 2 from Listeria innocua serovar 6a (strain ATCC BAA-680 / CLIP 11262).